We begin with the raw amino-acid sequence, 320 residues long: Lipoyl synthase (320 aa).

The [4Fe-4S] cluster site is built by C67, C72, C78, C93, C97, C100, and S307. Positions 79-296 (FNHGTATFMI…GVIAKEIGFT (218 aa)) constitute a Radical SAM core domain.

The protein belongs to the radical SAM superfamily. Lipoyl synthase family. Requires [4Fe-4S] cluster as cofactor.

The protein resides in the cytoplasm. It catalyses the reaction [[Fe-S] cluster scaffold protein carrying a second [4Fe-4S](2+) cluster] + N(6)-octanoyl-L-lysyl-[protein] + 2 oxidized [2Fe-2S]-[ferredoxin] + 2 S-adenosyl-L-methionine + 4 H(+) = [[Fe-S] cluster scaffold protein] + N(6)-[(R)-dihydrolipoyl]-L-lysyl-[protein] + 4 Fe(3+) + 2 hydrogen sulfide + 2 5'-deoxyadenosine + 2 L-methionine + 2 reduced [2Fe-2S]-[ferredoxin]. It functions in the pathway protein modification; protein lipoylation via endogenous pathway; protein N(6)-(lipoyl)lysine from octanoyl-[acyl-carrier-protein]: step 2/2. In terms of biological role, catalyzes the radical-mediated insertion of two sulfur atoms into the C-6 and C-8 positions of the octanoyl moiety bound to the lipoyl domains of lipoate-dependent enzymes, thereby converting the octanoylated domains into lipoylated derivatives. The protein is Lipoyl synthase of Pseudoalteromonas atlantica (strain T6c / ATCC BAA-1087).